The chain runs to 127 residues: Large ribosomal subunit protein uL24 (127 aa).

Belongs to the universal ribosomal protein uL24 family. Part of the 50S ribosomal subunit.

In terms of biological role, one of two assembly initiator proteins, it binds directly to the 5'-end of the 23S rRNA, where it nucleates assembly of the 50S subunit. Its function is as follows. One of the proteins that surrounds the polypeptide exit tunnel on the outside of the subunit. The protein is Large ribosomal subunit protein uL24 of Leptospira biflexa serovar Patoc (strain Patoc 1 / ATCC 23582 / Paris).